The following is a 469-amino-acid chain: RuvB-like helicase 2 (469 aa).

ATP is bound at residue 74–81 (GPPSTGKT).

Belongs to the RuvB family. In terms of assembly, may form heterododecamers with RVB1. Component of the SWR1 chromatin remodeling complex, the INO80 chromatin remodeling complex, and of the R2TP complex.

The protein resides in the nucleus. It carries out the reaction ATP + H2O = ADP + phosphate + H(+). DNA helicase which participates in several chromatin remodeling complexes, including the SWR1 and the INO80 complexes. The SWR1 complex mediates the ATP-dependent exchange of histone H2A for the H2A variant HZT1 leading to transcriptional regulation of selected genes by chromatin remodeling. The INO80 complex remodels chromatin by shifting nucleosomes and is involved in DNA repair. Also involved in pre-rRNA processing. This is RuvB-like helicase 2 (RVB2) from Eremothecium gossypii (strain ATCC 10895 / CBS 109.51 / FGSC 9923 / NRRL Y-1056) (Yeast).